The following is a 261-amino-acid chain: Succinate dehydrogenase [ubiquinone] iron-sulfur subunit, mitochondrial (261 aa).

Positions 31-122 constitute a 2Fe-2S ferredoxin-type domain; sequence FKIYRWNPDT…DVKIYPLPHM (92 aa). [2Fe-2S] cluster-binding residues include C82, C87, C90, and C102. A 4Fe-4S ferredoxin-type domain is found at 164 to 194; that stretch reads DRKKLDGLYECILCACCSTACPSYWWNNEQY. C174, C177, and C180 together coordinate [4Fe-4S] cluster. C184 is a [3Fe-4S] cluster binding site. W189 is an a ubiquinone binding site. 2 residues coordinate [3Fe-4S] cluster: C231 and C237. Position 241 (C241) interacts with [4Fe-4S] cluster.

The protein belongs to the succinate dehydrogenase/fumarate reductase iron-sulfur protein family. As to quaternary structure, component of complex II composed of four subunits: a flavoprotein (FP), an iron-sulfur protein (IP), and a cytochrome b composed of a large and a small subunit. Requires [2Fe-2S] cluster as cofactor. [3Fe-4S] cluster is required as a cofactor. It depends on [4Fe-4S] cluster as a cofactor.

Its subcellular location is the mitochondrion inner membrane. It carries out the reaction a quinone + succinate = fumarate + a quinol. It participates in carbohydrate metabolism; tricarboxylic acid cycle; fumarate from succinate (eukaryal route): step 1/1. Functionally, iron-sulfur protein (IP) subunit of succinate dehydrogenase (SDH) that is involved in complex II of the mitochondrial electron transport chain and is responsible for transferring electrons from succinate to ubiquinone (coenzyme Q). The protein is Succinate dehydrogenase [ubiquinone] iron-sulfur subunit, mitochondrial (SDH2) of Eremothecium gossypii (strain ATCC 10895 / CBS 109.51 / FGSC 9923 / NRRL Y-1056) (Yeast).